The following is a 51-amino-acid chain: Lantibiotic streptococcin A-FF22 (51 aa).

Positions 1-25 (MEKNNEVINSIQEVSLEELDQIIGA) are excised as a propeptide. Cross-links (beta-methyllanthionine (Thr-Cys)) lie at residues 33–38 (TISHEC) and 42–50 (TWAFLATCC). The segment at residues 35–49 (SHECHLNTWAFLATC) is a cross-link (lanthionine (Ser-Cys)). Thr-48 bears the 2,3-didehydrobutyrine mark.

The protein belongs to the type A lantibiotic family. In terms of processing, maturation of lantibiotics involves the enzymatic conversion of Thr, and Ser into dehydrated AA and the formation of thioether bonds with cysteine. This is followed by membrane translocation and cleavage of the modified precursor.

It localises to the secreted. The protein resides in the cell surface. Functionally, lanthionine-containing peptide antibiotic (lantibiotic) active on certain Gram-positive bacteria. The bactericidal activity of lantibiotics is based on depolarization of energized bacterial cytoplasmic membranes, initiated by the formation of aqueous transmembrane pores. The sequence is that of Lantibiotic streptococcin A-FF22 (scnA) from Streptococcus pyogenes.